A 352-amino-acid chain; its full sequence is Peptide chain release factor 1 (352 aa).

Glutamine 233 carries the post-translational modification N5-methylglutamine. A disordered region spans residues 288-309 (NAKDRKEQVGSGDRSERIRTYN). Basic and acidic residues predominate over residues 289 to 306 (AKDRKEQVGSGDRSERIR).

Belongs to the prokaryotic/mitochondrial release factor family. In terms of processing, methylated by PrmC. Methylation increases the termination efficiency of RF1.

It is found in the cytoplasm. Its function is as follows. Peptide chain release factor 1 directs the termination of translation in response to the peptide chain termination codons UAG and UAA. The polypeptide is Peptide chain release factor 1 (Helicobacter pylori (strain G27)).